An 853-amino-acid chain; its full sequence is MCSFVRVGSPKPLQTSASPLEMSSLRRTRAPEISELGLTPEQKDDIRDRVLRGSKSPTELGFDLRLEQDRKWRERMGSSEAKSPPCHALGVGLERHTISGTPTEMGNLGLHKGSAFQGSKPLGVLPGRVGPENKGLPPRLRYGGTLHPPFSTVHASPLAAESRRRPLAWGSAWTDAVVEKQPVVGLELRKEPEKEPTCVVMNPYPEMPPKEVDIGLPQTQESDEAKNTEPLIGLVREPSECPFAQQPEEKKEPGSTEPGVEPPGNIRPIYSGKFFDRVPCWPSAGKVKPVGYRVATCLTEKLPRLMTPPEAKKYFNFRYPPAGAERVFYGRANDPQIAPYLTHGLRSKISIPMGSLINPQPITTFQQKIKDKKESIYFSHQRAPLGKSHDQTPGLPKGMDVINTTLGTPTIRELSVRDTVNPSKSFEDVLKEGQEGHDLYTVSHNDYFAGEAKNRKYNPASFHRFNLYGIPTPHFNDGRTMAKALHWLHELQMERGAKIVSKRVDDFKEKFQHKLGKVLDPIAETMNVPPGHTFGSCLHPEEYGAGDLIHYRSPDEYLRGKDHQRAVVAAARHHLKKFNHQNFDTLQVAFRHYDKKGDGVIDRAELHEACVQANLHLDKMLLDHLFDYCDVDQDGLINYLEFANFLNWKDRIPLKEHEKRVVVKGKKPDCENVTDTSMGEAEPSLLINPEDIVPKEPGSSEETLRTIQRPGDKVSHQYKTTSSEINAVVGAVPSMCHPIFGVPTIRSDISAPRIRRVSDMNNYGDEGNAYSLLHPSIFSQKGVFERDFFKTRSKEEISDILTNIGVKLSKEEFENVWNLASKKHQRGEVCVETIRNVLDELLHADLVKCKTAM.

Disordered stretches follow at residues 1 to 31 (MCSF…TRAP) and 244 to 266 (AQQP…PGNI). EF-hand domains lie at 581–616 (QNFD…ANLH) and 617–652 (LDKM…KDRI). Ca(2+)-binding residues include D594, D598, E605, D630, D632, D634, and E641.

As to quaternary structure, microtubule inner protein component of sperm flagellar doublet microtubules. Interacts with STIM1 and ORAI1; the interactions take place upon Ca(2+)-store depletion and dissociate through a Ca(2+)-dependent mechanism. Interaction with STIM1 inhibits STIM1 interaction with SARAF.

The protein localises to the cytoplasm. It is found in the cytoskeleton. The protein resides in the cilium axoneme. Its subcellular location is the flagellum axoneme. In terms of biological role, microtubule inner protein (MIP) part of the dynein-decorated doublet microtubules (DMTs) in cilia axoneme, which is required for motile cilia beating. Cytosolic sensor for calcium, modulates the interaction of STIM1 and ORAI1 upon store depletion and the activation of store-operated Ca(2+) entry (SOCE) and NFAT translocation from cytosol to nucleus. The polypeptide is EF-hand domain-containing family member B (Mus musculus (Mouse)).